The sequence spans 288 residues: Acetyl-coenzyme A carboxylase carboxyl transferase subunit beta (288 aa).

Residues 32 to 288 (LFAKCPACKH…LELHTEVENV (257 aa)) form the CoA carboxyltransferase N-terminal domain. 4 residues coordinate Zn(2+): cysteine 36, cysteine 39, cysteine 54, and cysteine 57. The C4-type zinc-finger motif lies at 36–57 (CPACKHTIYQKDLGKNKVCPNC).

It belongs to the AccD/PCCB family. In terms of assembly, acetyl-CoA carboxylase is a heterohexamer composed of biotin carboxyl carrier protein (AccB), biotin carboxylase (AccC) and two subunits each of ACCase subunit alpha (AccA) and ACCase subunit beta (AccD). Zn(2+) is required as a cofactor.

The protein localises to the cytoplasm. The enzyme catalyses N(6)-carboxybiotinyl-L-lysyl-[protein] + acetyl-CoA = N(6)-biotinyl-L-lysyl-[protein] + malonyl-CoA. Its pathway is lipid metabolism; malonyl-CoA biosynthesis; malonyl-CoA from acetyl-CoA: step 1/1. Its function is as follows. Component of the acetyl coenzyme A carboxylase (ACC) complex. Biotin carboxylase (BC) catalyzes the carboxylation of biotin on its carrier protein (BCCP) and then the CO(2) group is transferred by the transcarboxylase to acetyl-CoA to form malonyl-CoA. The chain is Acetyl-coenzyme A carboxylase carboxyl transferase subunit beta from Lactococcus lactis subsp. cremoris (strain MG1363).